Reading from the N-terminus, the 735-residue chain is Polyribonucleotide nucleotidyltransferase (735 aa).

2 residues coordinate Mg(2+): aspartate 515 and aspartate 521. The 61-residue stretch at 581–641 folds into the KH domain; the sequence is PKLELFSVDP…KNVDAAKDYI (61 aa). The segment at 649 to 671 is disordered; the sequence is NSRGFGKKPHGHDRRDKDRQKPT. Positions 675–734 constitute an S1 motif domain; that stretch reads GDEFDGVVKSVVDFGAFIELKDGVDGLLHISKIKTPLNVGDRLKVCVSEQKGNKISLSLV.

Belongs to the polyribonucleotide nucleotidyltransferase family. Mg(2+) serves as cofactor.

It localises to the cytoplasm. The catalysed reaction is RNA(n+1) + phosphate = RNA(n) + a ribonucleoside 5'-diphosphate. In terms of biological role, involved in mRNA degradation. Catalyzes the phosphorolysis of single-stranded polyribonucleotides processively in the 3'- to 5'-direction. This is Polyribonucleotide nucleotidyltransferase from Campylobacter curvus (strain 525.92).